Consider the following 215-residue polypeptide: Wtf element wtf7 (215 aa).

The interval 1 to 21 (MSGSYAPIEDSADELSVHSGN) is disordered. 3 helical membrane passes run 119 to 139 (LAQSLFLLLPFNFIFFACLFF), 149 to 169 (LMGWILFGIWCLTCFLSSFIL), and 189 to 209 (LILFGLLFPGIVTMVVFYALY).

Belongs to the WTF family.

It is found in the spore membrane. Its function is as follows. May act in meiotic drive. The chain is Wtf element wtf7 from Schizosaccharomyces pombe (strain 972 / ATCC 24843) (Fission yeast).